The chain runs to 75 residues: Small ribosomal subunit protein eS17 (75 aa).

This sequence belongs to the eukaryotic ribosomal protein eS17 family.

This chain is Small ribosomal subunit protein eS17, found in Thermoplasma volcanium (strain ATCC 51530 / DSM 4299 / JCM 9571 / NBRC 15438 / GSS1).